Here is a 395-residue protein sequence, read N- to C-terminus: Tyrosine--tRNA ligase 2 (395 aa).

Residues 42 to 51 carry the 'HIGH' region motif; that stretch reads PTAPDIHLGH. Residues 226–230 carry the 'KMSKS' region motif; it reads KMSKS. Lysine 229 provides a ligand contact to ATP. Residues 334–394 enclose the S4 RNA-binding domain; it reads TPVANLLKDA…GKRKFARITI (61 aa).

The protein belongs to the class-I aminoacyl-tRNA synthetase family. TyrS type 2 subfamily. Homodimer.

It localises to the cytoplasm. It carries out the reaction tRNA(Tyr) + L-tyrosine + ATP = L-tyrosyl-tRNA(Tyr) + AMP + diphosphate + H(+). Functionally, catalyzes the attachment of tyrosine to tRNA(Tyr) in a two-step reaction: tyrosine is first activated by ATP to form Tyr-AMP and then transferred to the acceptor end of tRNA(Tyr). The protein is Tyrosine--tRNA ligase 2 of Vibrio parahaemolyticus serotype O3:K6 (strain RIMD 2210633).